The primary structure comprises 1276 residues: Probable outer membrane protein pmp6 (1276 aa).

The N-terminal stretch at 1–23 (MKYSLPWLLTSSALVFSLHPLMA) is a signal peptide. One can recognise an Autotransporter domain in the interval 981–1276 (DAPSHPGIWI…NANCGTRYSF (296 aa)).

This sequence belongs to the PMP outer membrane protein family.

The protein resides in the secreted. It is found in the cell wall. Its subcellular location is the cell outer membrane. The polypeptide is Probable outer membrane protein pmp6 (pmp6) (Chlamydia pneumoniae (Chlamydophila pneumoniae)).